A 378-amino-acid chain; its full sequence is Cysteine synthase (378 aa).

Positions 10 to 31 (NSEGDSNQQQNNNNNSNNNLKE) are disordered. The span at 15-28 (SNQQQNNNNNSNNN) shows a compositional bias: low complexity. N6-(pyridoxal phosphate)lysine is present on Lys-79. Residues 215–219 (GTGGT) and Ser-319 contribute to the pyridoxal 5'-phosphate site.

This sequence belongs to the cysteine synthase/cystathionine beta-synthase family. The cofactor is pyridoxal 5'-phosphate.

It carries out the reaction O-acetyl-L-serine + hydrogen sulfide = L-cysteine + acetate. It participates in amino-acid biosynthesis; L-cysteine biosynthesis; L-cysteine from L-serine: step 2/2. The polypeptide is Cysteine synthase (cysK) (Dictyostelium discoideum (Social amoeba)).